Here is a 332-residue protein sequence, read N- to C-terminus: MKVTFEELKGAFYRVLRSRNIAEDTADACAEMFARTTESGVYSHGVNRFPRFIQQLDNGDIIPDAKPQRVTSLGAIEQWDAQRAIGNLTAKKMMDRAIELASDHGIGLVALRNANHWMRGGSYGWQAAEKGYIGICWTNSIAVMPPWGAKECRIGTNPLIVAIPSTPITMVDMSMSMFSYGMLEVNRLAGRELPVDGGFDDNGQLTKEPGVIEKNRRILPMGYWKGSGLSIVLDMIATLLSNGSSVAEVTQENSDEYGVSQIFIAIEVDKLIDGATRDAKLQRIMDFITTAERADDNVAIRLPGHEFTKLLDDNRRHGITIDDSVWAKIQAL.

The active-site Proton donor is H44. Residues 168 to 174 (ITMVDMS), 224 to 225 (WK), and 304 to 306 (GHE) each bind NAD(+).

This sequence belongs to the LDH2/MDH2 oxidoreductase family. DlgD subfamily. In terms of assembly, homodimer.

It is found in the cytoplasm. It carries out the reaction 3-dehydro-L-gulonate + NAD(+) = 2,3-dioxo-L-gulonate + NADH + H(+). It catalyses the reaction 3-dehydro-L-gulonate + NADP(+) = 2,3-dioxo-L-gulonate + NADPH + H(+). In terms of biological role, catalyzes the reduction of 2,3-diketo-L-gulonate in the presence of NADH, to form 3-keto-L-gulonate. In Salmonella agona (strain SL483), this protein is 2,3-diketo-L-gulonate reductase.